We begin with the raw amino-acid sequence, 271 residues long: MTESVARLRGEQLTLGYGKYTVAENLTVEIPDGHFTAIIGPNGCGKSTLLRTLSRLMTPAHGHVWLDGEHIQHYASKEVARRIGLLAQNATTPGDITVQELVARGRYPHQPLFTRWRKEDEEAVTKAMQATGITHLADQSVDTLSGGQRQRAWIAMVLAQETAIMLLDEPTTWLDISHQIDLLELLSELNREKGYTLAAVLHDLNQACRYASHLIALREGKIVAQGAPKEIVTAELIERIYGLRCMIIDDPVAGTPLVVPLGRTAPSTANS.

Residues 8–244 (LRGEQLTLGY…ELIERIYGLR (237 aa)) form the ABC transporter domain. 40 to 47 (GPNGCGKS) provides a ligand contact to ATP.

It belongs to the ABC transporter superfamily. As to quaternary structure, the complex is composed of two ATP-binding proteins (FepC), two transmembrane proteins (FepD and FepG) and a solute-binding protein (FepB).

Its subcellular location is the cell inner membrane. It carries out the reaction Fe(III)-enterobactin(out) + ATP + H2O = Fe(III)-enterobactin(in) + ADP + phosphate + H(+). Functionally, part of the ABC transporter complex FepBDGC involved in ferric enterobactin uptake. Responsible for energy coupling to the transport system. The polypeptide is Ferric enterobactin transport ATP-binding protein FepC (fepC) (Escherichia coli (strain K12)).